The following is a 358-amino-acid chain: Methionine aminopeptidase 2 (358 aa).

Position 109 (H109) interacts with substrate. 3 residues coordinate a divalent metal cation: D130, D141, and H210. H218 provides a ligand contact to substrate. E243 and E339 together coordinate a divalent metal cation.

The protein belongs to the peptidase M24A family. Methionine aminopeptidase eukaryotic type 2 subfamily. Co(2+) serves as cofactor. Zn(2+) is required as a cofactor. It depends on Mn(2+) as a cofactor. The cofactor is Fe(2+).

It localises to the cytoplasm. The enzyme catalyses Release of N-terminal amino acids, preferentially methionine, from peptides and arylamides.. Cotranslationally removes the N-terminal methionine from nascent proteins. The N-terminal methionine is often cleaved when the second residue in the primary sequence is small and uncharged (Met-Ala-, Cys, Gly, Pro, Ser, Thr, or Val). The chain is Methionine aminopeptidase 2 from Encephalitozoon intestinalis (strain ATCC 50506) (Microsporidian parasite).